The following is a 444-amino-acid chain: Platelet-activating factor acetylhydrolase (444 aa).

The signal sequence occupies residues 1–21 (MLPPKLHALFCLCSCLTLVHP). Residues N60 and N200 are each glycosylated (N-linked (GlcNAc...) asparagine). The active-site Nucleophile is S274. Catalysis depends on charge relay system residues D297 and H352. N424 carries an N-linked (GlcNAc...) asparagine glycan.

It belongs to the AB hydrolase superfamily. Lipase family. N-glycosylated. Plasma.

It is found in the secreted. The protein localises to the extracellular space. It catalyses the reaction a 1-O-alkyl-2-acetyl-sn-glycero-3-phosphocholine + H2O = a 1-O-alkyl-sn-glycero-3-phosphocholine + acetate + H(+). The enzyme catalyses 1-O-decyl-2-acetyl-sn-glycero-3-phosphocholine + H2O = 1-O-decyl-sn-glycero-3-phosphocholine + acetate + H(+). The catalysed reaction is 1-O-dodecyl-2-acetyl-sn-glycero-3-phosphocholine + H2O = 1-O-dodecyl-sn-glycero-3-phosphocholine + acetate + H(+). It carries out the reaction 1-O-tetradecyl-2-acetyl-sn-glycero-3-phosphocholine + H2O = 1-O-tetradecyl-sn-glycero-3-phosphocholine + acetate + H(+). It catalyses the reaction 1-O-hexadecyl-2-acetyl-sn-glycero-3-phosphocholine + H2O = 1-O-hexadecyl-sn-glycero-3-phosphocholine + acetate + H(+). The enzyme catalyses 1-O-octadecyl-2-acetyl-sn-glycero-3-phosphocholine + H2O = 1-O-octadecyl-sn-glycero-3-phosphocholine + acetate + H(+). The catalysed reaction is 1-hexadecanoyl-2-acetyl-sn-glycero-3-phosphocholine + H2O = 1-hexadecanoyl-sn-glycero-3-phosphocholine + acetate + H(+). It carries out the reaction 1-hexadecanoyl-2-propionyl-sn-glycero-3-phosphocholine + H2O = propanoate + 1-hexadecanoyl-sn-glycero-3-phosphocholine + H(+). It catalyses the reaction 1-hexadecanoyl-2-butanoyl-sn-glycero-3-phosphocholine + H2O = butanoate + 1-hexadecanoyl-sn-glycero-3-phosphocholine + H(+). The enzyme catalyses 1-hexadecanoyl-2-pentanoyl-sn-glycero-3-phosphocholine + H2O = pentanoate + 1-hexadecanoyl-sn-glycero-3-phosphocholine + H(+). The catalysed reaction is 1-hexadecanoyl-2-glutaroyl-sn-glycero-3-phosphocholine + H2O = glutarate + 1-hexadecanoyl-sn-glycero-3-phosphocholine + H(+). It carries out the reaction 1-hexadecanoyl-2-(5-oxopentanoyl)-sn-glycero-3-phosphocholine + H2O = 5-oxopentanoate + 1-hexadecanoyl-sn-glycero-3-phosphocholine + H(+). It catalyses the reaction 1-hexadecanoyl-2-(9-oxononanoyl)-sn-glycero-3-phosphocholine + H2O = 9-oxononanoate + 1-hexadecanoyl-sn-glycero-3-phosphocholine + H(+). The enzyme catalyses 1-hexadecanoyl-2-[9-hydroperoxy-(10E-octadecenoyl)]-sn-glycero-3-phosphocholine + H2O = 9-hydroperoxy-10E-octadecenoate + 1-hexadecanoyl-sn-glycero-3-phosphocholine + H(+). The catalysed reaction is 1-hexadecanoyl-2-(10-hydroperoxy-8E-octadecenoyl)-sn-glycero-3-phosphocholine + H2O = 10-hydroperoxy-(8E)-octadecenoate + 1-hexadecanoyl-sn-glycero-3-phosphocholine + H(+). In terms of biological role, lipoprotein-associated calcium-independent phospholipase A2 involved in phospholipid catabolism during inflammatory and oxidative stress response. At the lipid-aqueous interface, hydrolyzes the ester bond of fatty acyl group attached at sn-2 position of phospholipids (phospholipase A2 activity). Specifically targets phospholipids with a short-chain fatty acyl group at sn-2 position. Can hydrolyze phospholipids with long fatty acyl chains, only if they carry oxidized functional groups. Hydrolyzes and inactivates platelet-activating factor (PAF, 1-O-alkyl-2-acetyl-sn-glycero-3-phosphocholine), a potent pro-inflammatory signaling lipid that acts through PTAFR on various innate immune cells. Hydrolyzes oxidatively truncated phospholipids carrying an aldehyde group at omega position, preventing their accumulation in low-density lipoprotein (LDL) particles and uncontrolled pro-inflammatory effects. As part of high-density lipoprotein (HDL) particles, can hydrolyze phospholipids having long-chain fatty acyl hydroperoxides at sn-2 position and protect against potential accumulation of these oxylipins in the vascular wall. Catalyzes the release from membrane phospholipids of F2-isoprostanes, lipid biomarkers of cellular oxidative damage. This chain is Platelet-activating factor acetylhydrolase (PLA2G7), found in Canis lupus familiaris (Dog).